The chain runs to 171 residues: 3-hydroxydecanoyl-[acyl-carrier-protein] dehydratase (171 aa).

The active site involves histidine 70.

The protein belongs to the thioester dehydratase family. FabA subfamily. Homodimer.

It localises to the cytoplasm. It carries out the reaction a (3R)-hydroxyacyl-[ACP] = a (2E)-enoyl-[ACP] + H2O. The enzyme catalyses (3R)-hydroxydecanoyl-[ACP] = (2E)-decenoyl-[ACP] + H2O. The catalysed reaction is (2E)-decenoyl-[ACP] = (3Z)-decenoyl-[ACP]. It participates in lipid metabolism; fatty acid biosynthesis. Necessary for the introduction of cis unsaturation into fatty acids. Catalyzes the dehydration of (3R)-3-hydroxydecanoyl-ACP to E-(2)-decenoyl-ACP and then its isomerization to Z-(3)-decenoyl-ACP. Can catalyze the dehydratase reaction for beta-hydroxyacyl-ACPs with saturated chain lengths up to 16:0, being most active on intermediate chain length. This chain is 3-hydroxydecanoyl-[acyl-carrier-protein] dehydratase, found in Shewanella woodyi (strain ATCC 51908 / MS32).